Consider the following 397-residue polypeptide: MDFSTHRLTTLLLLLLATVALGNAQSSQLTVDSHDITVLLNSNETFLVFANGLLDSDVEVALGTDSEDHLLLDPATFVYPAGSTRNQSVVITGLKAGNVKVVADSDDANKEIVKDVFVRVTVAKSRALIYTSIIFGWVYFVAWSVSFYPQIWSNYRRKSVEGLNFDFLALNIVGFTLYSMFNCGLYFIEDLQNEYEVRYPLGVNPVMLNDVVFSLHAMFATCITILQCFFYQRAQQRVSFIAYGILAIFAVVVVVSAGLAGGSVIHWLDFLYYCSYVKLTITIIKYVPQALMNYRRKSTSGWSIGNILLDFTGGTLSMLQMILNAHNYDDWVSIFGDPTKFGLGLFSVLFDVFFMLQHYVFYRHSRESSSSDLTTVTDVQNRTNESPPPSEVTTEKY.

The first 24 residues, 1–24 (MDFSTHRLTTLLLLLLATVALGNA), serve as a signal peptide directing secretion. At 25–126 (QSSQLTVDSH…FVRVTVAKSR (102 aa)) the chain is on the lumenal side. N-linked (GlcNAc...) asparagine glycans are attached at residues N43 and N86. Residues 127–147 (ALIYTSIIFGWVYFVAWSVSF) traverse the membrane as a helical segment. A PQ-loop 1 domain is found at 132-187 (SIIFGWVYFVAWSVSFYPQIWSNYRRKSVEGLNFDFLALNIVGFTLYSMFNCGLYF). At 148 to 167 (YPQIWSNYRRKSVEGLNFDF) the chain is on the cytoplasmic side. Residues 168-188 (LALNIVGFTLYSMFNCGLYFI) traverse the membrane as a helical segment. Topologically, residues 189–210 (EDLQNEYEVRYPLGVNPVMLND) are lumenal. Residues 211-231 (VVFSLHAMFATCITILQCFFY) form a helical membrane-spanning segment. Residues 232–239 (QRAQQRVS) are Cytoplasmic-facing. A helical transmembrane segment spans residues 240 to 260 (FIAYGILAIFAVVVVVSAGLA). Over 261-263 (GGS) the chain is Lumenal. A helical transmembrane segment spans residues 264–284 (VIHWLDFLYYCSYVKLTITII). The region spanning 271–327 (LYYCSYVKLTITIIKYVPQALMNYRRKSTSGWSIGNILLDFTGGTLSMLQMILNAHN) is the PQ-loop 2 domain. Topologically, residues 285 to 302 (KYVPQALMNYRRKSTSGW) are cytoplasmic. Residues 303-323 (SIGNILLDFTGGTLSMLQMIL) traverse the membrane as a helical segment. Topologically, residues 324–340 (NAHNYDDWVSIFGDPTK) are lumenal. The chain crosses the membrane as a helical span at residues 341–361 (FGLGLFSVLFDVFFMLQHYVF). Residues 362–397 (YRHSRESSSSDLTTVTDVQNRTNESPPPSEVTTEKY) lie on the Cytoplasmic side of the membrane. The span at 373–385 (LTTVTDVQNRTNE) shows a compositional bias: polar residues. The interval 373-397 (LTTVTDVQNRTNESPPPSEVTTEKY) is disordered.

It belongs to the cystinosin family.

The protein localises to the lysosome membrane. It carries out the reaction L-cystine(out) + H(+)(out) = L-cystine(in) + H(+)(in). Functionally, cystine/H(+) symporter that mediates export of cystine, the oxidized dimer of cysteine, from lysosomes. Involved in cysteine homeostasis during periods of fasting, which indirectly regulates mTORC1-mediated signaling by supporting de novo CoA synthesis, the TCA cycle and amino acid metabolism during periods of food shortage. Important for maintaining autophagy, and for development and survival during periods of fasting. In Drosophila melanogaster (Fruit fly), this protein is Cystinosin.